The primary structure comprises 681 residues: uncharacterized protein (681 aa).

This sequence in the N-terminal section; belongs to the purine/pyrimidine phosphoribosyltransferase family.

This is an uncharacterized protein from Mycobacterium tuberculosis (strain CDC 1551 / Oshkosh).